The chain runs to 404 residues: Calcium/calmodulin-dependent protein kinase cmkB (404 aa).

The 262-residue stretch at 18 to 279 (YKTGKTLGAG…AHQALQHPWI (262 aa)) folds into the Protein kinase domain. Residues 24–32 (LGAGLYSVV) and Lys-47 each bind ATP. The active-site Proton acceptor is Asp-141. A Phosphothreonine; by cmkC modification is found at Thr-179. Residues 279-322 (INPPYDTTDDLGSGEDLLPNIKKNFNARRTLHKAIDTVRAINKL) form an autoinhibitory domain region. The segment at 301 to 323 (KNFNARRTLHKAIDTVRAINKLR) is calmodulin-binding. Residues 336–404 (VDPKPEHVNG…WSRTAPRSER (69 aa)) form a disordered region. Basic and acidic residues-rich tracts occupy residues 338–370 (PKPE…DSRS) and 379–389 (QIREQERKVKE).

The protein belongs to the protein kinase superfamily. CAMK Ser/Thr protein kinase family. CaMK subfamily. In terms of processing, phosphorylated by cmkC on Thr-179.

It catalyses the reaction L-seryl-[protein] + ATP = O-phospho-L-seryl-[protein] + ADP + H(+). The enzyme catalyses L-threonyl-[protein] + ATP = O-phospho-L-threonyl-[protein] + ADP + H(+). Its activity is regulated as follows. Activated by Ca(2+)/calmodulin. Binding of calmodulin results in conformational change that relieves intrasteric autoinhibition and allows phosphorylation of Thr-179 within the activation loop by cmkC. Calcium/calmodulin-dependent protein kinase that operates in the calcium-triggered CaMKK-CaMK1 signaling cascade. Required in G1-phase of the cell cycle for proper timing of the initial nuclear division after germination, but not for subsequent mitoses. Required for the normal temporal regulation of nimX activity. The protein is Calcium/calmodulin-dependent protein kinase cmkB of Emericella nidulans (Aspergillus nidulans).